Here is a 290-residue protein sequence, read N- to C-terminus: Pyridoxal kinase PdxY (290 aa).

Substrate is bound by residues Ser12 and 47–48; that span reads TQ. Residues Asp114, Glu151, Lys184, and 211 to 214 contribute to the ATP site; that span reads RPLL. Asp225 lines the substrate pocket.

Belongs to the pyridoxine kinase family. PdxY subfamily. Homodimer. Requires Mg(2+) as cofactor.

It catalyses the reaction pyridoxal + ATP = pyridoxal 5'-phosphate + ADP + H(+). It functions in the pathway cofactor metabolism; pyridoxal 5'-phosphate salvage; pyridoxal 5'-phosphate from pyridoxal: step 1/1. In terms of biological role, pyridoxal kinase involved in the salvage pathway of pyridoxal 5'-phosphate (PLP). Catalyzes the phosphorylation of pyridoxal to PLP. The chain is Pyridoxal kinase PdxY from Pseudomonas putida (strain GB-1).